Reading from the N-terminus, the 601-residue chain is MTSTPTELIRNFSIIAHIDHGKSTLADRLIQTTGALSAREMTEQVLDNMDIEKERGITIKAQTVRLNYKAKDGKTYVLNLMDTPGHVDFAYEVSRSLAACEGSLLVVDASQGVEAQTLANVYQAIDANHEIVPVLNKIDLPAAEPERVKQQIEDVIGLDASDAVEISAKTGLNIEAVLEALVTRLPPPKGDETAPLKAMLVDSWYDSYLGVIILVRVRDGRLRKGQRVRMMSTGAVHTIDQVGTFSPKLTPQADLGPGEIGYITAAIKTVADCNVGDTITDDRAPATEPLPGFKPSIPVVWCGLYPVDADDFEKLRDSLAKLRLNDASFHYEAETSAALGFGFRCGFLGLLHLEIIQERLSREFDLDLIATAPSVVYRLYKTSGEMMELHNPADMPDGSVIDHIEEPWIRATIMVPDDYLGAVLTLCNERRGQQVDLTYVGNRAMAVYRLPLNEVVFDFYDRLKSVSRGYASFDYQMDDYVEGDLVKISILVNQEPVDALAFIAHRSVADTRGRAICAKLKDLIPRQLFKIAIQAAIGGRVIARETLGALSKDVTAKCYGGDISRKRKLLEKQKEGKKRMRQFGKVEIPQTAFLAALKMDA.

The region spanning 7–189 (ELIRNFSIIA…ALVTRLPPPK (183 aa)) is the tr-type G domain. Residues 19-24 (DHGKST) and 136-139 (NKID) each bind GTP.

The protein belongs to the TRAFAC class translation factor GTPase superfamily. Classic translation factor GTPase family. LepA subfamily.

The protein localises to the cell inner membrane. It carries out the reaction GTP + H2O = GDP + phosphate + H(+). Required for accurate and efficient protein synthesis under certain stress conditions. May act as a fidelity factor of the translation reaction, by catalyzing a one-codon backward translocation of tRNAs on improperly translocated ribosomes. Back-translocation proceeds from a post-translocation (POST) complex to a pre-translocation (PRE) complex, thus giving elongation factor G a second chance to translocate the tRNAs correctly. Binds to ribosomes in a GTP-dependent manner. This is Elongation factor 4 from Acidiphilium cryptum (strain JF-5).